The chain runs to 188 residues: Elongation factor P (188 aa).

It belongs to the elongation factor P family.

The protein localises to the cytoplasm. Its pathway is protein biosynthesis; polypeptide chain elongation. Functionally, involved in peptide bond synthesis. Stimulates efficient translation and peptide-bond synthesis on native or reconstituted 70S ribosomes in vitro. Probably functions indirectly by altering the affinity of the ribosome for aminoacyl-tRNA, thus increasing their reactivity as acceptors for peptidyl transferase. The chain is Elongation factor P from Gluconobacter oxydans (strain 621H) (Gluconobacter suboxydans).